The primary structure comprises 638 residues: Threonine--tRNA ligase (638 aa).

The TGS domain maps to 1–59 (MEKIKVKIKGKEYEVEKGTPLGKIFELAGIKDALGGVINGKIIDLQTPVRESGEIKPVY). The tract at residues 243–536 (DHRRLGKELE…LLEHYAGLLP (294 aa)) is catalytic. Residues cysteine 336, histidine 387, and histidine 513 each contribute to the Zn(2+) site.

The protein belongs to the class-II aminoacyl-tRNA synthetase family. As to quaternary structure, homodimer. Zn(2+) serves as cofactor.

It is found in the cytoplasm. The enzyme catalyses tRNA(Thr) + L-threonine + ATP = L-threonyl-tRNA(Thr) + AMP + diphosphate + H(+). Its function is as follows. Catalyzes the attachment of threonine to tRNA(Thr) in a two-step reaction: L-threonine is first activated by ATP to form Thr-AMP and then transferred to the acceptor end of tRNA(Thr). Also edits incorrectly charged L-seryl-tRNA(Thr). This chain is Threonine--tRNA ligase, found in Aquifex aeolicus (strain VF5).